A 591-amino-acid polypeptide reads, in one-letter code: Formate--tetrahydrofolate ligase (591 aa).

ATP is bound at residue 74–81 (TPLGEGKS).

The protein belongs to the formate--tetrahydrofolate ligase family.

It carries out the reaction (6S)-5,6,7,8-tetrahydrofolate + formate + ATP = (6R)-10-formyltetrahydrofolate + ADP + phosphate. It functions in the pathway one-carbon metabolism; tetrahydrofolate interconversion. This Lawsonia intracellularis (strain PHE/MN1-00) protein is Formate--tetrahydrofolate ligase.